The sequence spans 633 residues: UvrABC system protein C (633 aa).

The region spanning 21 to 100 (TDPGVYKFLD…IKELQPRYNV (80 aa)) is the GIY-YIG domain. Residues 214-249 (QELMDLLKDEMQRQSDAHNFEEAARLRDQVKALKDY) form the UVR domain.

Belongs to the UvrC family. As to quaternary structure, interacts with UvrB in an incision complex.

Its subcellular location is the cytoplasm. The UvrABC repair system catalyzes the recognition and processing of DNA lesions. UvrC both incises the 5' and 3' sides of the lesion. The N-terminal half is responsible for the 3' incision and the C-terminal half is responsible for the 5' incision. The polypeptide is UvrABC system protein C (Salinibacter ruber (strain DSM 13855 / M31)).